Reading from the N-terminus, the 409-residue chain is Immunity-related GTPase family M protein 1 (409 aa).

An IRG-type G domain is found at 75–251 (IPVSIFVTGD…PKLRDTLHKD (177 aa)). GTP is bound by residues 84 to 91 (DSGNGMSS), 109 to 113 (TGVVR), and 191 to 193 (KLD). Ser202 is subject to Phosphoserine. Position 232 to 234 (232 to 234 (SSL)) interacts with GTP. Residue Lys270 forms a Glycyl lysine isopeptide (Lys-Gly) (interchain with G-Cter in ubiquitin) linkage. Residues 350–374 (KLRLMTCAIVNAFFRLLRFLPCVCC) are alpha-K amphipathic helix.

The protein belongs to the TRAFAC class dynamin-like GTPase superfamily. IRG family. In terms of assembly, interacts with ULK1; promoting the coassembly of ULK1 and BECN1. Interacts with BECN1; enhancing BECN1-interacting partners and influencing the composition of the BECN1 complex. Interacts with ATG16L1. Interacts with NOD2; promoting Irgm1 'Lys-63'-linked polyubiquitination, which is required for interactions with the core autophagy factors. Interacts with STX17; promoting STX17 recruitment to autophagosomes. Interacts with ATG8 proteins (GABARAP, GABARAPL1, GABARAPL2, MAP1LC3A, MAP1LC3B and MAP1LC3C); promoting STX17 recruitment to autophagosomes. Interacts with TFEB; promoting association between TFEB and PPP3CB and TFEB dephosphorylation. Interacts with PPP3CB; promoting association between TFEB and PPP3CB and TFEB dephosphorylation. Interacts with NLRP3; preventing NLRP3 inflammasome assembly and promoting SQSTM1/p62-dependent autophagic degradation of NLRP3. Interacts with CGAS; promoting SQSTM1/p62-dependent autophagic degradation of CGAS. Interacts with RIGI/RIG-I; promoting SQSTM1/p62-dependent autophagic degradation of RIGI/RIG-I. Interacts with NOD1; promoting SQSTM1/p62-dependent autophagic degradation of RIGI/RIG-I. Interacts with NOD2; promoting SQSTM1/p62-dependent autophagic degradation of RIGI/RIG-I. Interacts with RIPK2; promoting SQSTM1/p62-dependent autophagic degradation of RIGI/RIG-I. Interacts with PIK3CA. Post-translationally, palmitoylated on C-terminal Cys residues. Palmitoylation, together with the alpha-K amphipathic helix, which binds phosphatidylinositol, mediate binding to membranes. Ubiquitinated via 'Lys-63'-linked polyubiquitination in a NOD2-dependent process. 'Lys-63'-linked polyubiquitination is required for interactions with the core autophagy factors. Ubiquitination at Lys-270 by the DCX(WDR77) complex, also named CLR4(WDR77) complex, in intestinal cells, leading to its degradation by the proteasome. As to expression, expressed in lung and primary macrophages.

It localises to the golgi apparatus membrane. Its subcellular location is the cell membrane. The protein localises to the cytoplasmic vesicle. It is found in the phagosome membrane. The protein resides in the autophagosome membrane. It localises to the lysosome membrane. Its subcellular location is the late endosome membrane. The protein localises to the mitochondrion membrane. It is found in the lipid droplet. The protein resides in the cell projection. It localises to the phagocytic cup. It catalyses the reaction GTP + H2O = GDP + phosphate + H(+). In terms of biological role, immunity-related GTPase that plays important roles in innate immunity and inflammatory response. Acts as a dynamin-like protein that binds to intracellular membranes and promotes remodeling and trafficking of those membranes. Required for clearance of acute protozoan and bacterial infections by interacting with autophagy and lysosome regulatory proteins, thereby promoting the fusion of phagosomes with lysosomes for efficient degradation of cargo including microbes. Regulates selective autophagy, including xenophagy and mitophagy, both directly and indirectly. Directly regulates autophagy by acting as a molecular adapter that promotes the coassembly of the core autophagy machinery to mediate antimicrobial defense: Irgm1 (1) activates AMPK, which in turn phosphorylates ULK1 and BECN1 to induce autophagy, (2) promotes the coassembly of ULK1 and BECN1, enhancing BECN1-interacting partners and (3) influences the composition of the BECN1 complex, by competing with the negative regulators BCL2 and RUBCN, to trigger autophagy. Also activates autophagy by promoting recruitment of STX17 to autophagosomes. In collaboration with ATG8 proteins, regulate lysosomal biogenesis, a fundamental process for any autophagic pathway, by promoting TFEB dephosphorylation. Also modulates autophagy by assisting with autophagosome formation and preventing lysosomal deacidification. Regulates autophagy by affecting mitochondrial fusion and fission. Also involved in M1 macrophage activation for the production of proinflammatory cytokines. While activating autophagy, acts as a key negative regulator of the inflammatory and interferon responses both by (1) promoting mitophagy and (2) mediating autophagy-dependent degradation of effectors of the inflammatory response. Promotes degradation of damaged and IFNG/IFN-gamma-stressed mitochondria via mitophagy, preventing cytosolic release of ligands that activate inflammation. Negatively regulates interferon-signaling in hematopoietic stem cells, preserving hematopoietic stem cell number and function. Promotes expansion of activated CD4(+) T-cells by inhibiting IFNG/IFN-gamma signaling, thereby preventing Ifng-mediated cell death of CD4(+) T-cells. Acts as a suppressor of inflammation by promoting recruitment of inflammation effectors, such as CGAS, RIGI/RIG-I and NLRP3, to autophagosome membranes, leading to their SQSTM1/p62-dependent autophagic degradation. Also directly inhibits assembly of the NLRP3 inflammasome by preventing the association between NLRP3 and PYCARD. Acts as a negative regulator of antiviral innate immune response by suppressing the RIPK2-dependent pro-inflammatory response: mediates recruitment of RIPosomes, composed of RIPK2 and NOD1 or NOD2, to autophagosome membranes, promoting their SQSTM1/p62-dependent autophagic degradation. The polypeptide is Immunity-related GTPase family M protein 1 (Mus musculus (Mouse)).